A 495-amino-acid chain; its full sequence is Ribitol 5-phosphate transferase FKRP (495 aa).

At 1 to 6 (MRLTRC) the chain is on the cytoplasmic side. A helical membrane pass occupies residues 7 to 29 (QAALAAAITLNLLVLFYVSWLQH). Residues 30–495 (QPRNSRARGP…PALLSLTGSG (466 aa)) lie on the Lumenal side of the membrane. Residues Cys-168 and Cys-191 are joined by a disulfide bond. Residues Asn-172 and Asn-209 are each glycosylated (N-linked (GlcNAc...) asparagine). Residues Cys-289, Cys-296, Cys-317, and Cys-318 each coordinate Zn(2+). The interval 289-318 (CNKETTRCFGTVVGDTPAYLYEERWTPPCC) is zinc finger loop. Residues Gly-345, Arg-352, 359-364 (WDYDVD), 437-438 (QD), and 480-482 (NPQ) each bind CDP-L-ribitol. Residues Asp-360, Asp-362, and Asp-364 each coordinate Mg(2+).

This sequence belongs to the LicD transferase family. Homodimer; disulfide-linked. Tetramer. Forms a complex composed of FKRP, FKTN/fukutin, and RXYLT1/TMEM5. Also exists as large multimeric protein complexes. May interact with the dystrophin-glycoprotein complex (DGC). Requires Mg(2+) as cofactor. In terms of processing, N-glycosylated. Expressed in the retina (at protein level). Expressed predominantly in skeletal muscle, placenta, and heart and relatively weakly in brain, lung, liver, kidney, and pancreas.

It localises to the golgi apparatus membrane. Its subcellular location is the secreted. It is found in the cell membrane. The protein localises to the sarcolemma. The protein resides in the rough endoplasmic reticulum. It localises to the cytoplasm. It carries out the reaction 3-O-[Rib-ol-P-3-beta-D-GalNAc-(1-&gt;3)-beta-D-GlcNAc-(1-&gt;4)-(O-6-P-alpha-D-Man)]-Thr-[protein] + CDP-L-ribitol = 3-O-[Rib-ol-P-Rib-ol-P-3-beta-D-GalNAc-(1-&gt;3)-beta-D-GlcNAc-(1-&gt;4)-(O-6-P-alpha-D-Man)]-Thr-[protein] + CMP + H(+). Its pathway is protein modification; protein glycosylation. Functionally, catalyzes the transfer of a ribitol 5-phosphate from CDP-L-ribitol to the ribitol 5-phosphate previously attached by FKTN/fukutin to the phosphorylated O-mannosyl trisaccharide (N-acetylgalactosamine-beta-3-N-acetylglucosamine-beta-4-(phosphate-6-)mannose), a carbohydrate structure present in alpha-dystroglycan (DAG1). This constitutes the second step in the formation of the ribose 5-phosphate tandem repeat which links the phosphorylated O-mannosyl trisaccharide to the ligand binding moiety composed of repeats of 3-xylosyl-alpha-1,3-glucuronic acid-beta-1. This Homo sapiens (Human) protein is Ribitol 5-phosphate transferase FKRP.